The sequence spans 229 residues: Potassium/proton antiporter CemA (229 aa).

Transmembrane regions (helical) follow at residues 7–27 (FTPL…SLSF), 114–134 (ITCF…LVIL), 154–174 (ILLL…ELMI), and 189–209 (IISG…KYWI).

Belongs to the CemA family.

It is found in the plastid. The protein localises to the chloroplast inner membrane. It carries out the reaction K(+)(in) + H(+)(out) = K(+)(out) + H(+)(in). Functionally, contributes to K(+)/H(+) antiport activity by supporting proton efflux to control proton extrusion and homeostasis in chloroplasts in a light-dependent manner to modulate photosynthesis. Prevents excessive induction of non-photochemical quenching (NPQ) under continuous-light conditions. Indirectly promotes efficient inorganic carbon uptake into chloroplasts. This chain is Potassium/proton antiporter CemA, found in Platanus occidentalis (Sycamore).